The sequence spans 447 residues: N-succinylarginine dihydrolase (447 aa).

Residues 19-28 (AGLSFGNEAS), asparagine 110, and 137-138 (HR) each bind substrate. Glutamate 174 is a catalytic residue. Residue arginine 212 coordinates substrate. Residue histidine 248 is part of the active site. Substrate contacts are provided by aspartate 250 and asparagine 359. The active-site Nucleophile is cysteine 365.

It belongs to the succinylarginine dihydrolase family. As to quaternary structure, homodimer.

It catalyses the reaction N(2)-succinyl-L-arginine + 2 H2O + 2 H(+) = N(2)-succinyl-L-ornithine + 2 NH4(+) + CO2. Its pathway is amino-acid degradation; L-arginine degradation via AST pathway; L-glutamate and succinate from L-arginine: step 2/5. Functionally, catalyzes the hydrolysis of N(2)-succinylarginine into N(2)-succinylornithine, ammonia and CO(2). In Salmonella paratyphi B (strain ATCC BAA-1250 / SPB7), this protein is N-succinylarginine dihydrolase.